The following is an 85-amino-acid chain: MATKKAGGSTRNGRDSEAKRLGVKRFGGESVLAGSIIVRQRGTKFHAGNNVGMGRDHTLFATADGKVKFEVKGEKSRKYVSIVTE.

Positions 1-20 are disordered; sequence MATKKAGGSTRNGRDSEAKR.

Belongs to the bacterial ribosomal protein bL27 family.

The sequence is that of Large ribosomal subunit protein bL27 from Haemophilus influenzae (strain PittEE).